We begin with the raw amino-acid sequence, 445 residues long: Phosphoglucosamine mutase (445 aa).

The Phosphoserine intermediate role is filled by S102. Mg(2+)-binding residues include S102, D241, D243, and D245. S102 is modified (phosphoserine).

Belongs to the phosphohexose mutase family. Mg(2+) is required as a cofactor. Activated by phosphorylation.

The enzyme catalyses alpha-D-glucosamine 1-phosphate = D-glucosamine 6-phosphate. Its function is as follows. Catalyzes the conversion of glucosamine-6-phosphate to glucosamine-1-phosphate. The protein is Phosphoglucosamine mutase of Escherichia fergusonii (strain ATCC 35469 / DSM 13698 / CCUG 18766 / IAM 14443 / JCM 21226 / LMG 7866 / NBRC 102419 / NCTC 12128 / CDC 0568-73).